A 352-amino-acid chain; its full sequence is Hematopoietic SH2 domain-containing protein (352 aa).

Residues 34 to 125 (WFHGAISRED…PRRELLTQPC (92 aa)) form the SH2 domain. 2 disordered regions span residues 157–199 (EEAS…LGET) and 241–352 (VISG…PGYC). Positions 180 to 191 (RITTKEATSSCP) are enriched in polar residues. Over residues 283-295 (PKDRKVPTRKAER) the composition is skewed to basic and acidic residues. Pro residues predominate over residues 343–352 (QPPPFAPGYC).

In terms of assembly, interacts with FES and TNK2. May be phosphorylated by FES and ACK1. As to expression, predominantly expressed in spleen and hematopoietic cells such as peripheral blood leukocytes and weakly expressed in prostate, thymus, heart, small intestine and placenta.

The protein localises to the cytoplasm. It localises to the nucleus. Functionally, may be a modulator of the apoptotic response through its ability to affect mitochondrial stability. Adapter protein involved in tyrosine kinase and CD28 signaling. Seems to affect CD28-mediated activation of the RE/AP element of the interleukin-2 promoter. The polypeptide is Hematopoietic SH2 domain-containing protein (HSH2D) (Homo sapiens (Human)).